The chain runs to 98 residues: Protein S100-A11 (98 aa).

Thr-5 carries the post-translational modification Phosphothreonine. 2 consecutive EF-hand domains span residues 8 to 44 and 50 to 85; these read CIES…ELAA and KDPG…LAIA. Lys-22 is subject to N6-acetyllysine. Ca(2+) contacts are provided by Asn-26, Gln-28, Glu-33, Asp-63, Asn-65, Asp-67, Gln-69, and Glu-74.

This sequence belongs to the S-100 family. In terms of assembly, homodimer; disulfide-linked. Phosphorylation at Thr-5 significantly suppresses homodimerization and promotes association with NCL/nucleolin which induces nuclear translocation.

The protein localises to the cytoplasm. The protein resides in the nucleus. Facilitates the differentiation and the cornification of keratinocytes. The sequence is that of Protein S100-A11 (S100a11) from Mus musculus (Mouse).